The chain runs to 261 residues: Methyltransferase nsrG (261 aa).

A methyltransferase domain region spans residues 49 to 141; that stretch reads DVGAGNGPYA…AHQLRPGALF (93 aa).

Belongs to the methyltransferase superfamily.

It participates in secondary metabolite biosynthesis. Its function is as follows. Methyltransferase; part of the gene cluster that mediates the biosynthesis of the tetrahydroxanthone dimer neosartorin, which exhibits antibacterial activity. The two different monomeric units appear to be synthesized by the same set of enzymes, among which the Baeyer-Villiger monooxygenase nsrF is the key enzyme for the divergence of the biosynthetic routes. The pathway begins with the synthesis of atrochrysone thioester by the polyketide synthase nsrB. The atrochrysone carboxyl ACP thioesterase nsrC then breaks the thioester bond and releases the atrochrysone carboxylic acid from AacuL. Atrochrysone carboxylic acid is decarboxylated by the decarboxylase nsrE, and oxidized by the anthrone oxygenase nsrD to yield emodin. Emodin is then reduced to emodin hydroquinone by the oxidoreductase nsrR. A-ring reduction by the short chain dehydrogenase nsrJ, dehydration by the scytalone dehydratase-like protein nsrI and probable spontaneous re-oxidation, results in overall deoxygenation to chrysophanol. The Baeyer-Villiger monooxygenase nsrF accepts chrysophanol as a substrate to insert one oxygen atom at two different positions to yield the precursors of both monomric units. NsrF is promiscuous/flexible in interacting with the 2 (non methylated and methylated) aromatic rings of chrysophanol, thus diverging the biosynthetic pathway at this point. After the hydrolysis of the lactones, methylesterification by the methyltransferase nsrG yields respectively moniliphenone and 2,2',6'-trihydroxy-4-methyl-6-methoxya-cyldiphenylmethanone. The next steps are the hydroxylation by the FAD-dependent monooxygenase nsrK, followed by isomerization by the monooxygenase nsrQ. The short chain dehydrogenase/reductase nsrO then catalyzes the C-5 ketoreduction to give the xanthone skeleton of blennolide C and 5-acetylblennolide A. The acetyltransferase nsrL has a strict substrate specificity and uses only blennolide A but not blennolide C to yield 5-acetylblennolide A as the single-acetylated product. In the final step of the biosynthesis, the heterodimerization of the 2 xanthones, blennolide C and 5-acetylblennolide A, is catalyzed by the cytochrome P450 monooxygenase nsrP. NsrP can utilize at least three different xanthones as its substrates to perform the dimerization reaction. The polypeptide is Methyltransferase nsrG (Aspergillus novofumigatus (strain IBT 16806)).